A 59-amino-acid chain; its full sequence is Pycsar effector protein MePycTM (59 aa).

Residues 36–56 (VAVAIYLLGAAMLSSGAAVLA) form a helical membrane-spanning segment.

It is found in the cell membrane. In terms of biological role, pycsar (pyrimidine cyclase system for antiphage resistance) provides immunity against bacteriophage. The pyrimidine cyclase (PycC) synthesizes cyclic nucleotides in response to infection; these serve as specific second messenger signals. The signals activate the adjacent effector, leading to bacterial cell death and abortive phage infection. A clade D Pycsar system. Its function is as follows. The effector gene of a two-gene Pycsar system. Expression of this and adjacent uridylate cyclase MePycC (AC A0A1C5G2V9) probably confers resistance to bacteriophage. The genes are probably only expressed in response to bacteriophage infection. Probably only responds to cUMP (produced by its cognate NTP cyclase), acts by impairing membrane integrity. This chain is Pycsar effector protein MePycTM, found in Micromonospora echinofusca.